Reading from the N-terminus, the 160-residue chain is Small ribosomal subunit protein uS7 (160 aa).

The protein belongs to the universal ribosomal protein uS7 family. Part of the 30S ribosomal subunit. Contacts proteins S9 and S11.

In terms of biological role, one of the primary rRNA binding proteins, it binds directly to 16S rRNA where it nucleates assembly of the head domain of the 30S subunit. Is located at the subunit interface close to the decoding center, probably blocks exit of the E-site tRNA. This Rickettsia rickettsii (strain Iowa) protein is Small ribosomal subunit protein uS7.